Here is a 332-residue protein sequence, read N- to C-terminus: Phosphate acyltransferase (332 aa).

It belongs to the PlsX family. As to quaternary structure, homodimer. Probably interacts with PlsY.

The protein localises to the cytoplasm. The catalysed reaction is a fatty acyl-[ACP] + phosphate = an acyl phosphate + holo-[ACP]. Its pathway is lipid metabolism; phospholipid metabolism. Catalyzes the reversible formation of acyl-phosphate (acyl-PO(4)) from acyl-[acyl-carrier-protein] (acyl-ACP). This enzyme utilizes acyl-ACP as fatty acyl donor, but not acyl-CoA. The polypeptide is Phosphate acyltransferase (Nitratiruptor sp. (strain SB155-2)).